We begin with the raw amino-acid sequence, 1114 residues long: Proto-oncogene tyrosine-protein kinase receptor Ret (1114 aa).

The first 28 residues, 1 to 28 (MAKATSGAAGLRLLLLLLLPLLGKVALG), serve as a signal peptide directing secretion. The interval 29 to 153 (LYFSRDAYWE…RVYFSFFNTS (125 aa)) is cadherin-like region 1 (CLD1). Residues 29–635 (LYFSRDAYWE…QDPLCDELCR (607 aa)) lie on the Extracellular side of the membrane. A glycan (N-linked (GlcNAc...) asparagine) is linked at Asn98. Cys137 and Cys142 are oxidised to a cystine. The N-linked (GlcNAc...) asparagine glycan is linked to Asn151. 2 disulfides stabilise this stretch: Cys157–Cys197 and Cys166–Cys243. Residues 168–272 (PETRPSFRIR…YDEDDSAPTF (105 aa)) form the Cadherin domain. 2 residues coordinate Ca(2+): Glu178 and Asn179. A glycan (N-linked (GlcNAc...) asparagine) is linked at Asn199. Ca(2+)-binding residues include Asp230, Glu232, Asp264, Glu265, Asp266, Asp267, Ser268, Asp300, and Asp302. Residues 265–379 (EDDSAPTFPA…MQLAVLVNDS (115 aa)) form a cadherin-like region 3 (CLD3) region. Asn336, Asn343, Asn361, Asn367, and Asn377 each carry an N-linked (GlcNAc...) asparagine glycan. Residue Asp378 coordinates Ca(2+). Asn394 carries N-linked (GlcNAc...) asparagine glycosylation. Residues 405–506 (PSTYSLSVSR…QAQLLVTVEG (102 aa)) are cadherin-like region 4 (CLD4). A disulfide bridge connects residues Cys426 and Cys430. Residues Asn448 and Asn468 are each glycosylated (N-linked (GlcNAc...) asparagine). Intrachain disulfides connect Cys449–Cys478, Cys515–Cys531, Cys519–Cys541, and Cys528–Cys558. N-linked (GlcNAc...) asparagine glycosylation occurs at Asn554. Residues Thr564, Cys565, Asp567, His569, Glu574, and Asp584 each contribute to the Ca(2+) site. 5 cysteine pairs are disulfide-bonded: Cys565-Cys581, Cys570-Cys585, Cys609-Cys620, Cys611-Cys618, and Cys630-Cys634. The chain crosses the membrane as a helical span at residues 636–657 (TVIAAAVLFSFIVSVLLSAFCI). The Cytoplasmic portion of the chain corresponds to 658–1114 (HCYHKFAHKP…AAKLMDTFDS (457 aa)). Position 687 is a phosphotyrosine; by autocatalysis (Tyr687). An O-linked (GlcNAc) serine glycan is attached at Ser688. At Ser696 the chain carries Phosphoserine. The 293-residue stretch at 724-1016 (LVLGKTLGEG…KMMVKRRDYL (293 aa)) folds into the Protein kinase domain. ATP is bound by residues 730–738 (LGEGEFGKV) and Lys758. 805-807 (EYA) contributes to the semaxanib binding site. Phosphotyrosine; by autocatalysis occurs at positions 806, 809, and 826. Asp874 serves as the catalytic Proton acceptor. Tyr900, Tyr905, Tyr981, Tyr1015, Tyr1029, Tyr1062, Tyr1090, and Tyr1096 each carry phosphotyrosine; by autocatalysis.

This sequence belongs to the protein kinase superfamily. Tyr protein kinase family. Phosphorylated form interacts with the PBT domain of DOK2, DOK4 and DOK5. The phosphorylated form interacts with PLCG1 and GRB7. Interacts (not phosphorylated) with PTK2/FAK1 (via FERM domain). Extracellular cell-membrane anchored RET cadherin fragments form complex in neurons with reduced trophic status, preferentially at the contact sites between somas. Interacts with AIP in the pituitary gland; this interaction prevents the formation of the AIP-survivin complex. Interacts (inactive) with CBLC and CD2AP; dissociates upon activation by GDNF which increases CBLC:CD2AP interaction. Requires Ca(2+) as cofactor. Post-translationally, autophosphorylated on C-terminal tyrosine residues upon ligand stimulation. In terms of processing, proteolytically cleaved by caspase-3. The soluble RET kinase fragment is able to induce cell death. The extracellular cell-membrane anchored RET cadherin fragment accelerates cell adhesion in sympathetic neurons.

It localises to the cell membrane. The protein localises to the endosome membrane. The catalysed reaction is L-tyrosyl-[protein] + ATP = O-phospho-L-tyrosyl-[protein] + ADP + H(+). With respect to regulation, repressed by 4-(3-hydroxyanilino)-quinolines derivatives, indolin-2-one-derivatives, 2-(alkylsulfanyl)-4-(3-thienyl) nicotinonitrile analogs, 3- and 4-substituted beta-carbolin-1-ones, vandetanib, motesanib, sorafenib (BAY 43-9006), cabozantinib (XL184), lenvatinib, sunitinib, nintedanib, and withaferin A (WA). Inactivation by sorafenib both reduces kinase activity and promotes lysosomal degradation. Its function is as follows. Receptor tyrosine-protein kinase involved in numerous cellular mechanisms including cell proliferation, neuronal navigation, cell migration, and cell differentiation in response to glia cell line-derived growth family factors (GDNF, NRTN, ARTN, PSPN and GDF15). In contrast to most receptor tyrosine kinases, RET requires not only its cognate ligands but also coreceptors, for activation. GDNF ligands (GDNF, NRTN, ARTN, PSPN and GDF15) first bind their corresponding GDNFR coreceptors (GFRA1, GFRA2, GFRA3, GFRA4 and GFRAL, respectively), triggering RET autophosphorylation and activation, leading to activation of downstream signaling pathways, including the MAPK- and AKT-signaling pathways. Acts as a dependence receptor via the GDNF-GFRA1 signaling: in the presence of the ligand GDNF in somatotrophs within pituitary, promotes survival and down regulates growth hormone (GH) production, but triggers apoptosis in absence of GDNF. Required for the molecular mechanisms orchestration during intestine organogenesis via the ARTN-GFRA3 signaling: involved in the development of enteric nervous system and renal organogenesis during embryonic life, and promotes the formation of Peyer's patch-like structures, a major component of the gut-associated lymphoid tissue. Mediates, through interaction with GDF15-receptor GFRAL, GDF15-induced cell-signaling in the brainstem which triggers an aversive response, characterized by nausea, vomiting, and/or loss of appetite in response to various stresses. Modulates cell adhesion via its cleavage by caspase in sympathetic neurons and mediates cell migration in an integrin (e.g. ITGB1 and ITGB3)-dependent manner. Also active in the absence of ligand, triggering apoptosis through a mechanism that requires receptor intracellular caspase cleavage. Triggers the differentiation of rapidly adapting (RA) mechanoreceptors. Involved in the development of the neural crest. Regulates nociceptor survival and size. Phosphorylates PTK2/FAK1. Isoform 1 in complex with GFRAL induces higher activation of MAPK-signaling pathway than isoform 2 in complex with GFRAL. The protein is Proto-oncogene tyrosine-protein kinase receptor Ret of Homo sapiens (Human).